We begin with the raw amino-acid sequence, 2168 residues long: MESGERLPSSAASSTTPTSSSTPSVASVVSKGGLSTGVASLSSTINPCGHLFRTAGDQPFNLSTVSSAFPMVSHPVFGLHSASSGHSEFGGLGTLGTPTALAAHPQLASFPGAEWWRTTDAHTRTGATFFPPLLGIPPLFAPPAQNHDSSSFHSRTSGKSNRNGPEKGVNGSINGSNTSSVIGINTSVLSTTASSSMGQTKSTSSGGGNRKCNQEQSKNQPLDARVDKIKDKKPRKKAMESSSNSDSDSGTSSDTSSEGISSSDSDDLEEDEEEEDQSIEESEDDDSDSESEAQHKSNNQVLLHGISDPKADGQKATEKAQEKRIHQPLPLASESQTHSFQSQQKQPQVLSQQLPFIFQSSQAKEESVNKHTSVIQSTGLVSNVKPLSLVNQAKKETYMKLIVPSPDVLKAGNKNTSEESSLLTSELRSKREQYKQAFPSQLKKQESSKSLKKVIAALSNPKATSSSPAHPKQTLENNHPNPFLTNALLGNHQPNGVIQSVIQEAPLALTTKTKMQSKINENIAAASSTPFSSPVNLSTSGRRTPGNQTPVMPSASPILHSQGKEKAVSNNVNPVKTQHHSHPAKSLVEQFRGTDSDIPSSKDSEDSNEDEEEDDEEEDEEDDEDDESDDSQSESDSNSESDTEGSEEEDDDDKDQDESDSDTEGEKTSMKLNKTTSSVKSPSMSLTGHSTPRNLHIAKAPGSAPAALCSESQSPAFLGTSSSTLTSSPHSGTSKRRRVTDERELRIPLEYGWQRETRIRNFGGRLQGEVAYYAPCGKKLRQYPEVIKYLSRNGIMDISRDNFSFSAKIRVGDFYEARDGPQGMQWCLLKEEDVIPRIRAMEGRRGRPPNPDRQRAREESRMRRRKGRPPNVGNAEFLDNADAKLLRKLQAQEIARQAAQIKLLRKLQKQEQARVAKEAKKQQAIMAAEEKRKQKEQIKIMKQQEKIKRIQQIRMEKELRAQQILEAKKKKKEEAANAKLLEAEKRIKEKEMRRQQAVLLKHQERERRRQHMMLMKAMEARKKAEEKERLKQEKRDEKRLNKERKLEQRRLELEMAKELKKPNEDMCLADQKPLPELPRIPGLVLSGSTFSDCLMVVQFLRNFGKVLGFDVNIDVPNLSVLQEGLLNIGDSMGEVQDLLVRLLSAAVCDPGLITGYKAKTALGEHLLNVGVNRDNVSEILQIFMEAHCGQTELTESLKTKAFQAHTPAQKASVLAFLINELACSKSVVSEIDKNIDYMSNLRRDKWVVEGKLRKLRIIHAKKTGKRDTSGGIDLGEEQHPLGTPTPGRKRRRKGGDSDYDDDDDDDSDDQGDEDDEDEEDKEDKKGKKTDICEDEDEGDQAASVEELEKQIEKLSKQQSQYRRKLFDASHSLRSVMFGQDRYRRRYWILPQCGGIFVEGMESGEGLEEIAKEREKLKKAESVQIKEEMFETSGDSLNCSNTDHCEQKEDLKEKDNTNLFLQKPGSFSKLSKLLEVAKMPPESEVMTPKPNAGANGCTLSYQNSGKHSLGSVQSTATQSNVEKADSNNLFNTGSSGPGKFYSPLPNDQLLKTLTEKNRQWFSLLPRTPCDDTSLTHADMSTASLVTPQSQPPSKSPSPTPAPLGSSAQNPVGLNPFALSPLQVKGGVSMMGLQFCGWPTGVVTSNIPFTSSVPSLGSGLGLSEGNGNSFLTSNVASSKSESPVPQNEKATSAQPAAVEVAKPVDFPSPKPIPEEMQFGWWRIIDPEDLKALLKVLHLRGIREKALQKQIQKHLDYITQACLKNKDVAIIELNENEENQVTRDIVENWSVEEQAMEMDLSVLQQVEDLERRVASASLQVKGWMCPEPASEREDLVYFEHKSFTKLCKEHDGEFTGEDESSAHALERKSDNPLDIAVTRLADLERNIERRIEEDIAPGLRVWRRALSEARSAAQVALCIQQLQKSIAWEKSIMKVYCQICRKGDNEELLLLCDGCDKGCHTYCHRPKITTIPDGDWFCPACIAKASGQTLKIKKLHVKGKKTNESKKGKKVTLTGDTEDEDSASTSSSLKRGNKDLKKRKMEENTSINLSKQESFTSVKKPKRDDSKDLALCSMILTEMETHEDAWPFLLPVNLKLVPGYKKVIKKPMDFSTIREKLSSGQYPNLETFALDVRLVFDNCETFNEDDSDIGRAGHNMRKYFEKKWTDTFKVS.

Disordered stretches follow at residues 1–29, 140–348, 409–428, 459–479, 528–698, 719–740, 841–872, and 1021–1043; these read MESG…ASVV, FAPP…KQPQ, LKAG…SELR, SNPK…ENNH, STPF…LHIA, GTSS…RRVT, MEGR…PPNV, and RKKA…LNKE. Low complexity predominate over residues 8–29; it reads PSSAASSTTPTSSSTPSVASVV. Polar residues-rich tracts occupy residues 146–163 and 171–193; these read NHDS…SNRN and GSIN…STTA. 2 stretches are compositionally biased toward low complexity: residues 194–204 and 240–263; these read SSSMGQTKSTS and ESSS…ISSS. Residues 264–291 show a composition bias toward acidic residues; it reads DSDDLEEDEEEEDQSIEESEDDDSDSES. A compositionally biased stretch (basic and acidic residues) spans 307-325; that stretch reads SDPKADGQKATEKAQEKRI. Residues 335-348 are compositionally biased toward low complexity; the sequence is SQTHSFQSQQKQPQ. 2 stretches are compositionally biased toward polar residues: residues 461 to 479 and 528 to 551; these read PKAT…ENNH and STPF…QTPV. A compositionally biased stretch (basic and acidic residues) spans 592-605; sequence RGTDSDIPSSKDSE. Positions 606 to 663 are enriched in acidic residues; the sequence is DSNEDEEEDDEEEDEEDDEDDESDDSQSESDSNSESDTEGSEEEDDDDKDQDESDSDT. The segment covering 670–693 has biased composition (polar residues); it reads MKLNKTTSSVKSPSMSLTGHSTPR. The segment covering 720–732 has biased composition (low complexity); it reads TSSSTLTSSPHSG. The region spanning 739-810 is the MBD domain; it reads VTDERELRIP…DNFSFSAKIR (72 aa). Residues 841 to 861 show a composition bias toward basic and acidic residues; that stretch reads MEGRRGRPPNPDRQRAREESR. Positions 883 to 1061 form a coiled coil; the sequence is AKLLRKLQAQ…ELEMAKELKK (179 aa). Positions 1087–1152 constitute a DDT domain; that stretch reads GSTFSDCLMV…LSAAVCDPGL (66 aa). Residues 1265–1341 form a disordered region; it reads KRDTSGGIDL…CEDEDEGDQA (77 aa). The segment covering 1297 to 1321 has biased composition (acidic residues); sequence SDYDDDDDDDSDDQGDEDDEDEEDK. The span at 1322-1331 shows a compositional bias: basic and acidic residues; it reads EDKKGKKTDI. Residues 1334 to 1375 adopt a coiled-coil conformation; sequence DEDEGDQAASVEELEKQIEKLSKQQSQYRRKLFDASHSLRSV. A Glycyl lysine isopeptide (Lys-Gly) (interchain with G-Cter in SUMO2) cross-link involves residue lysine 1425. An N6-acetyllysine modification is found at lysine 1462. Phosphoserine is present on residues serine 1465 and serine 1467. Polar residues predominate over residues 1503–1533; sequence SGKHSLGSVQSTATQSNVEKADSNNLFNTGS. Disordered stretches follow at residues 1503-1542, 1582-1607, and 1670-1694; these read SGKH…FYSP, SLVT…SSAQ, and TSNV…AQPA. Residues 1588–1600 show a composition bias toward pro residues; it reads SQPPSKSPSPTPA. Residues 1670–1692 are compositionally biased toward polar residues; it reads TSNVASSKSESPVPQNEKATSAQ. Serine 1680 bears the Phosphoserine mark. Residues 1931–1981 form a PHD-type zinc finger; the sequence is KVYCQICRKGDNEELLLLCDGCDKGCHTYCHRPKITTIPDGDWFCPACIAK. The segment at 1998 to 2040 is disordered; the sequence is KTNESKKGKKVTLTGDTEDEDSASTSSSLKRGNKDLKKRKMEE. Phosphothreonine is present on threonine 2014. Serine 2019 is subject to Phosphoserine. Residues 2029 to 2040 are compositionally biased toward basic and acidic residues; that stretch reads GNKDLKKRKMEE. One can recognise a Bromo domain in the interval 2060-2164; the sequence is RDDSKDLALC…KYFEKKWTDT (105 aa).

The protein belongs to the WAL family. Component of the BRF-1 ISWI chromatin remodeling complex, at least composed of SMARCA1 and BAZ2B, which regulates the spacing of histone octamers on the DNA template to facilitate access to DNA. Within the BRF-1 ISWI chromatin remodeling complex interacts with SMARCA1; the interaction is direct. Component of the BRF-5 ISWI chromatin remodeling complex, at least composed of SMARCA5/SNF2H and BAZ2B, which regulates the spacing of histone octamers on the DNA template to facilitate access to DNA. Within the BRF-5 ISWI chromatin remodeling complex interacts with SMARCA5/SNF2H; the interaction is direct. Interacts with acetylated lysine residues on histone H1.4, H2A, H2B, H3 and H4 (in vitro). Interacts with EHMT1. As to expression, expressed at varying levels in several tissues, whereas a smaller transcript was expressed specifically in testis.

It is found in the nucleus. Its function is as follows. Regulatory subunit of the ATP-dependent BRF-1 and BRF-5 ISWI chromatin remodeling complexes, which form ordered nucleosome arrays on chromatin and facilitate access to DNA during DNA-templated processes such as DNA replication, transcription, and repair. Both complexes regulate the spacing of nucleosomes along the chromatin and have the ability to slide mononucleosomes to the center of a DNA template. The BRF-1 ISWI chromatin remodeling complex has a lower ATP hydrolysis rate than the BRF-5 ISWI chromatin remodeling complex. Chromatin reader protein, which may play a role in transcriptional regulation via interaction with ISWI. Involved in positively modulating the rate of age-related behavioral deterioration. Represses the expression of mitochondrial function-related genes, perhaps by occupying their promoter regions, working in concert with histone methyltransferase EHMT1. This chain is Bromodomain adjacent to zinc finger domain protein 2B (BAZ2B), found in Homo sapiens (Human).